Here is a 77-residue protein sequence, read N- to C-terminus: Sec-independent protein translocase protein TatA (77 aa).

The chain crosses the membrane as a helical span at residues Met-1–Gly-21. The tract at residues Met-43–Ala-77 is disordered. The segment covering Asp-64 to Ala-77 has biased composition (basic and acidic residues).

It belongs to the TatA/E family. The Tat system comprises two distinct complexes: a TatABC complex, containing multiple copies of TatA, TatB and TatC subunits, and a separate TatA complex, containing only TatA subunits. Substrates initially bind to the TatABC complex, which probably triggers association of the separate TatA complex to form the active translocon.

It localises to the cell inner membrane. Its function is as follows. Part of the twin-arginine translocation (Tat) system that transports large folded proteins containing a characteristic twin-arginine motif in their signal peptide across membranes. TatA could form the protein-conducting channel of the Tat system. This chain is Sec-independent protein translocase protein TatA, found in Burkholderia mallei (strain NCTC 10247).